A 379-amino-acid polypeptide reads, in one-letter code: 1-deoxy-D-xylulose 5-phosphate reductoisomerase (379 aa).

T10, G11, S12, I13, N39, and N121 together coordinate NADPH. K122 is a 1-deoxy-D-xylulose 5-phosphate binding site. E123 contributes to the NADPH binding site. Residue D147 coordinates Mn(2+). S148, E149, S173, and H196 together coordinate 1-deoxy-D-xylulose 5-phosphate. Residue E149 participates in Mn(2+) binding. Residue G202 participates in NADPH binding. The 1-deoxy-D-xylulose 5-phosphate site is built by S209, N214, K215, and E218. E218 lines the Mn(2+) pocket.

Belongs to the DXR family. The cofactor is Mg(2+). Mn(2+) serves as cofactor.

It catalyses the reaction 2-C-methyl-D-erythritol 4-phosphate + NADP(+) = 1-deoxy-D-xylulose 5-phosphate + NADPH + H(+). It participates in isoprenoid biosynthesis; isopentenyl diphosphate biosynthesis via DXP pathway; isopentenyl diphosphate from 1-deoxy-D-xylulose 5-phosphate: step 1/6. In terms of biological role, catalyzes the NADPH-dependent rearrangement and reduction of 1-deoxy-D-xylulose-5-phosphate (DXP) to 2-C-methyl-D-erythritol 4-phosphate (MEP). This is 1-deoxy-D-xylulose 5-phosphate reductoisomerase from Chlamydia pneumoniae (Chlamydophila pneumoniae).